The following is a 302-amino-acid chain: UDP-N-acetylenolpyruvoylglucosamine reductase (302 aa).

Residues 30-196 (IGGPADLFVE…IAATLEMKKG (167 aa)) enclose the FAD-binding PCMH-type domain. Arginine 174 is a catalytic residue. The Proton donor role is filled by serine 225. The active site involves glutamate 295.

It belongs to the MurB family. FAD is required as a cofactor.

It localises to the cytoplasm. The enzyme catalyses UDP-N-acetyl-alpha-D-muramate + NADP(+) = UDP-N-acetyl-3-O-(1-carboxyvinyl)-alpha-D-glucosamine + NADPH + H(+). The protein operates within cell wall biogenesis; peptidoglycan biosynthesis. Cell wall formation. The chain is UDP-N-acetylenolpyruvoylglucosamine reductase from Anoxybacillus flavithermus (strain DSM 21510 / WK1).